The following is a 140-amino-acid chain: MSKRGRGGASGAKFRISLGLPVGAVMNCADNTGAKNLFVISVYGIRGRLNRLPSAGVGDMFVCSVKKGKPELRKKVLQGVVIRQRKQFRRKDGTFIYFEDNAGVIVNNKGEMKGSAITGPVAKECADLWPRIAANAGSIA.

This sequence belongs to the universal ribosomal protein uL14 family.

This is Large ribosomal subunit protein uL14 (rpl-23) from Caenorhabditis elegans.